The sequence spans 375 residues: Succinyl-diaminopimelate desuccinylase (375 aa).

Residue His66 coordinates Zn(2+). Asp68 is an active-site residue. Residue Asp99 participates in Zn(2+) binding. Catalysis depends on Glu133, which acts as the Proton acceptor. Residues Glu134, Glu162, and His348 each contribute to the Zn(2+) site.

The protein belongs to the peptidase M20A family. DapE subfamily. Homodimer. Requires Zn(2+) as cofactor. Co(2+) serves as cofactor.

It carries out the reaction N-succinyl-(2S,6S)-2,6-diaminopimelate + H2O = (2S,6S)-2,6-diaminopimelate + succinate. Its pathway is amino-acid biosynthesis; L-lysine biosynthesis via DAP pathway; LL-2,6-diaminopimelate from (S)-tetrahydrodipicolinate (succinylase route): step 3/3. In terms of biological role, catalyzes the hydrolysis of N-succinyl-L,L-diaminopimelic acid (SDAP), forming succinate and LL-2,6-diaminopimelate (DAP), an intermediate involved in the bacterial biosynthesis of lysine and meso-diaminopimelic acid, an essential component of bacterial cell walls. In Janthinobacterium sp. (strain Marseille) (Minibacterium massiliensis), this protein is Succinyl-diaminopimelate desuccinylase.